Reading from the N-terminus, the 78-residue chain is MSRVCQVTGKRPTVGNNRSHAKNATRRRFLPNLQSHRFWVEGEKRFVTLRLTPKGMRIIDKLGIEAVLADIRARGEKV.

Residues 1 to 25 (MSRVCQVTGKRPTVGNNRSHAKNAT) form a disordered region.

This sequence belongs to the bacterial ribosomal protein bL28 family.

This chain is Large ribosomal subunit protein bL28, found in Tolumonas auensis (strain DSM 9187 / NBRC 110442 / TA 4).